Reading from the N-terminus, the 780-residue chain is Pumilio domain-containing protein C4G8.03c (780 aa).

Disordered stretches follow at residues 1-29 (MVNR…LSSY), 298-330 (LSHF…LHSK), and 358-411 (NHHS…GKTV). Basic and acidic residues predominate over residues 298-307 (LSHFPDHLDP). Residues 311–322 (PSPYQPSSLQPL) are compositionally biased toward low complexity. Residues 358 to 382 (NHHSSLSMDNDPTNVSTKNRNNQTV) show a composition bias toward polar residues. The PUM-HD domain maps to 435–778 (EKSDDLSNLL…HILAKLTSST (344 aa)). Pumilio repeat units follow at residues 462-497 (GFLG…LFFP), 498-533 (EIRQ…SMLN), 534-569 (GIGE…SLLL), 570-606 (KIII…PLFL), 607-642 (SMEE…RLVN), 643-678 (SIIK…RIIE), 679-714 (KFFG…QMLQ), 715-752 (EFLS…LILR), and 753-780 (SISH…STSS).

The chain is Pumilio domain-containing protein C4G8.03c from Schizosaccharomyces pombe (strain 972 / ATCC 24843) (Fission yeast).